Here is a 111-residue protein sequence, read N- to C-terminus: Large ribosomal subunit protein uL22 (111 aa).

Belongs to the universal ribosomal protein uL22 family. As to quaternary structure, part of the 50S ribosomal subunit.

This protein binds specifically to 23S rRNA; its binding is stimulated by other ribosomal proteins, e.g. L4, L17, and L20. It is important during the early stages of 50S assembly. It makes multiple contacts with different domains of the 23S rRNA in the assembled 50S subunit and ribosome. Its function is as follows. The globular domain of the protein is located near the polypeptide exit tunnel on the outside of the subunit, while an extended beta-hairpin is found that lines the wall of the exit tunnel in the center of the 70S ribosome. The protein is Large ribosomal subunit protein uL22 of Chlamydia felis (strain Fe/C-56) (Chlamydophila felis).